We begin with the raw amino-acid sequence, 152 residues long: Xanthine-guanine phosphoribosyltransferase (152 aa).

5-phospho-alpha-D-ribose 1-diphosphate is bound by residues 37–38 (RG) and 88–96 (DDLVDTGNT). Asp-89 is a binding site for Mg(2+). Asp-92 and Ile-135 together coordinate guanine. Xanthine contacts are provided by Asp-92 and Ile-135. Residues 92-96 (DTGNT) and 134-135 (WI) contribute to the GMP site.

The protein belongs to the purine/pyrimidine phosphoribosyltransferase family. XGPT subfamily. In terms of assembly, homotetramer. Mg(2+) is required as a cofactor.

Its subcellular location is the cell inner membrane. It catalyses the reaction GMP + diphosphate = guanine + 5-phospho-alpha-D-ribose 1-diphosphate. It carries out the reaction XMP + diphosphate = xanthine + 5-phospho-alpha-D-ribose 1-diphosphate. The enzyme catalyses IMP + diphosphate = hypoxanthine + 5-phospho-alpha-D-ribose 1-diphosphate. Its pathway is purine metabolism; GMP biosynthesis via salvage pathway; GMP from guanine: step 1/1. It functions in the pathway purine metabolism; XMP biosynthesis via salvage pathway; XMP from xanthine: step 1/1. Functionally, purine salvage pathway enzyme that catalyzes the transfer of the ribosyl-5-phosphate group from 5-phospho-alpha-D-ribose 1-diphosphate (PRPP) to the N9 position of the 6-oxopurines guanine and xanthine to form the corresponding ribonucleotides GMP (guanosine 5'-monophosphate) and XMP (xanthosine 5'-monophosphate), with the release of PPi. To a lesser extent, also acts on hypoxanthine. The sequence is that of Xanthine-guanine phosphoribosyltransferase from Actinobacillus succinogenes (strain ATCC 55618 / DSM 22257 / CCUG 43843 / 130Z).